Here is a 504-residue protein sequence, read N- to C-terminus: Arabinose import ATP-binding protein AraG (504 aa).

2 ABC transporter domains span residues 8–243 (LSFR…MVGR) and 256–499 (YGEE…MPKV). 40–47 (GENGAGKS) is a binding site for ATP.

Belongs to the ABC transporter superfamily. Arabinose importer (TC 3.A.1.2.2) family. As to quaternary structure, the complex is composed of two ATP-binding proteins (AraG), two transmembrane proteins (AraH) and a solute-binding protein (AraF).

The protein localises to the cell inner membrane. The catalysed reaction is L-arabinose(out) + ATP + H2O = L-arabinose(in) + ADP + phosphate + H(+). In terms of biological role, part of the ABC transporter complex AraFGH involved in arabinose import. Responsible for energy coupling to the transport system. The polypeptide is Arabinose import ATP-binding protein AraG (Escherichia coli O6:K15:H31 (strain 536 / UPEC)).